Here is a 427-residue protein sequence, read N- to C-terminus: Serine--tRNA ligase (427 aa).

Residue 233-235 coordinates L-serine; sequence TAE. Position 264–266 (264–266) interacts with ATP; it reads RSE. Glu287 provides a ligand contact to L-serine. 351-354 is a binding site for ATP; that stretch reads EISS. Ser386 serves as a coordination point for L-serine.

Belongs to the class-II aminoacyl-tRNA synthetase family. Type-1 seryl-tRNA synthetase subfamily. In terms of assembly, homodimer. The tRNA molecule binds across the dimer.

It is found in the cytoplasm. The enzyme catalyses tRNA(Ser) + L-serine + ATP = L-seryl-tRNA(Ser) + AMP + diphosphate + H(+). It catalyses the reaction tRNA(Sec) + L-serine + ATP = L-seryl-tRNA(Sec) + AMP + diphosphate + H(+). Its pathway is aminoacyl-tRNA biosynthesis; selenocysteinyl-tRNA(Sec) biosynthesis; L-seryl-tRNA(Sec) from L-serine and tRNA(Sec): step 1/1. Catalyzes the attachment of serine to tRNA(Ser). Is also able to aminoacylate tRNA(Sec) with serine, to form the misacylated tRNA L-seryl-tRNA(Sec), which will be further converted into selenocysteinyl-tRNA(Sec). This chain is Serine--tRNA ligase, found in Dechloromonas aromatica (strain RCB).